The following is a 366-amino-acid chain: ERCC4 domain-containing protein EP364R (366 aa).

In terms of domain architecture, ERCC4 spans 3 to 101 (FLVADHREHH…QLYFFVEGPA (99 aa)). 2 stretches are compositionally biased toward polar residues: residues 320-331 (RPTMQVATQPAA) and 349-366 (PTGHQTLSKEMSLNTVRC). The interval 320 to 366 (RPTMQVATQPAATQPLHKVSDDASSDASSPTGHQTLSKEMSLNTVRC) is disordered.

It belongs to the asfivirus EP364R family.

Plays a role in the inhibition of type I interferon signaling pathway. Mechanistically, specifically interacts with 2',3'-cGAMP and cleaves it via its phosphodiesterase activity. In turn, prevents 2',3'-cGAMP interaction with host ER-resident STING1 leading to inhibition of downstream signaling pathway and type I interferon production. The sequence is that of ERCC4 domain-containing protein EP364R from Ornithodoros (relapsing fever ticks).